A 167-amino-acid polypeptide reads, in one-letter code: Small ribosomal subunit protein uS5 (167 aa).

The 64-residue stretch at 11–74 (LQEKLIAVNR…EKARRNMINV (64 aa)) folds into the S5 DRBM domain.

Belongs to the universal ribosomal protein uS5 family. In terms of assembly, part of the 30S ribosomal subunit. Contacts proteins S4 and S8.

With S4 and S12 plays an important role in translational accuracy. Its function is as follows. Located at the back of the 30S subunit body where it stabilizes the conformation of the head with respect to the body. This is Small ribosomal subunit protein uS5 from Klebsiella pneumoniae subsp. pneumoniae (strain ATCC 700721 / MGH 78578).